A 267-amino-acid polypeptide reads, in one-letter code: MKKIATATIATAGFATIAIASGNQAHASEQDNYGYNPNDPTSYSYTYTIDAQGNYHYTWKGNWHPSQLNQDNGYYSYYYYNGYNNYNNYNNGYSYNNYSRYNNYSNNNQSYNYNNYNSYNTNSYRTGGLGASYSTSSNNVQVTTTMAPSSNGRSISSGYTSGRNLYTSGQCTYYVFDRVGGKIGSTWGNASNWANAAARAGYTVNNTPKAGAIMQTTQGAYGHVAYVESVNSNGSVRVSEMNYGYGPGVVTSRTISASQAAGYNFIH.

The N-terminal stretch at 1–27 (MKKIATATIATAGFATIAIASGNQAHA) is a signal peptide. A run of 7 repeats spans residues 83-85 (YNN), 86-88 (YNN), 89-91 (YNN), 95-97 (YNN), 101-103 (YNN), 104-106 (YSN), and 113-115 (YNN). The segment at 83 to 115 (YNNYNNYNNGYSYNNYSRYNNYSNNNQSYNYNN) is 7 X 3 AA repeats of Y-[NS]-N. The Peptidase C51 domain maps to 146-267 (MAPSSNGRSI…SQAAGYNFIH (122 aa)).

The protein resides in the secreted. In terms of biological role, not known; immunogenic protein. The polypeptide is Staphylococcal secretory antigen ssaA2 (ssaA2) (Staphylococcus aureus (strain NCTC 8325 / PS 47)).